The sequence spans 302 residues: Haloalkane dehalogenase (302 aa).

The region spanning 48 to 150 (PVLLMHGEPS…AGLVIANTGL (103 aa)) is the AB hydrolase-1 domain. Asp-123 acts as the Nucleophile in catalysis. The Proton donor role is filled by Asp-249. Catalysis depends on His-278, which acts as the Proton acceptor.

This sequence belongs to the haloalkane dehalogenase family. Type 1 subfamily. Monomer.

The enzyme catalyses 1-haloalkane + H2O = a halide anion + a primary alcohol + H(+). Catalyzes hydrolytic cleavage of carbon-halogen bonds in halogenated aliphatic compounds, leading to the formation of the corresponding primary alcohols, halide ions and protons. The chain is Haloalkane dehalogenase from Caulobacter sp. (strain K31).